The sequence spans 349 residues: Protein RecA (349 aa).

Position 65–72 (65–72 (GPESSGKT)) interacts with ATP.

Belongs to the RecA family.

Its subcellular location is the cytoplasm. Its function is as follows. Can catalyze the hydrolysis of ATP in the presence of single-stranded DNA, the ATP-dependent uptake of single-stranded DNA by duplex DNA, and the ATP-dependent hybridization of homologous single-stranded DNAs. It interacts with LexA causing its activation and leading to its autocatalytic cleavage. This chain is Protein RecA, found in Aliarcobacter butzleri (strain RM4018) (Arcobacter butzleri).